A 395-amino-acid polypeptide reads, in one-letter code: Mevalonate kinase (395 aa).

ATP is bound by residues lysine 13, asparagine 55, asparagine 104, serine 135, and 140–146; that span reads GAGLGSS. Serine 146 (proton donor) is an active-site residue. Positions 146 and 193 each coordinate Mg(2+). Aspartate 204 functions as the Proton acceptor in the catalytic mechanism.

Belongs to the GHMP kinase family. Mevalonate kinase subfamily. In terms of assembly, homodimer. The cofactor is Mg(2+).

The protein localises to the cytoplasm. It is found in the peroxisome. The catalysed reaction is (R)-mevalonate + ATP = (R)-5-phosphomevalonate + ADP + H(+). Its pathway is isoprenoid biosynthesis; isopentenyl diphosphate biosynthesis via mevalonate pathway; isopentenyl diphosphate from (R)-mevalonate: step 1/3. Farnesyl pyrophosphate and geranyl pyrophosphate inhibit mevalonate kinase activity by binding competitively at the ATP-binding sites. Catalyzes the phosphorylation of mevalonate to mevalonate 5-phosphate, a key step in isoprenoid and cholesterol biosynthesis. This chain is Mevalonate kinase, found in Mus musculus (Mouse).